A 235-amino-acid polypeptide reads, in one-letter code: MEEETHTDAKIRAENGTGSSPRGPGCSLRHFACEQNLLSRPDGSASFLQGDTSVLAGVYGPAEVKVSKEIFNKATLEVILRPKIGLPGVAEKSRERLIRNTCEAVVLGTLHPRTSITVVLQVVSDAGSLLACCLNAACMALVDAGVPMRALFCGVACALDSDGTLVLDPTSKQEKEARAVLTFALDSVERKLLMSSTKGLYSDTELQQCLAAAQAASQHVFRFYRESLQRRYSKS.

The segment covering 1-13 has biased composition (basic and acidic residues); sequence MEEETHTDAKIRA. The tract at residues 1–24 is disordered; it reads MEEETHTDAKIRAENGTGSSPRGP. Serine 20 is subject to Phosphoserine.

This sequence belongs to the RNase PH family. In terms of assembly, homodimer. Component of the RNA exosome core complex (Exo-9), composed of EXOSC1, EXOSC2, EXOSC3, EXOSC4, EXOSC5, EXOSC6, EXOSC7, EXOSC8 and EXOSC9; within the complex interacts with EXOSC3, EXOSC8, and EXOSC9. The catalytically inactive RNA exosome core complex (Exo-9) associates with the catalytic subunit EXOSC10/RRP6. Exo-9 may associate with DIS3 to form the nucleolar exosome complex, or DIS3L to form the cytoplasmic exosome complex. Exo-9 is formed by a hexameric base ring consisting of the heterodimers EXOSC4-EXOSC9, EXOSC5-EXOSC8 and EXOSC6-EXOSC7, and a cap ring consisting of EXOSC1, EXOSC2 and EXOSC3. The RNA exosome complex associates with cofactors C1D/RRP47, MPHOSPH6/MPP6 and MTREX/MTR4. Interacts with GTPBP1. Interacts with ZC3HAV1. Interacts with DDX17 only in the presence of ZC3HAV1 in an RNA-independent manner. Highly expressed in a variety of hematopoietic and epithelial tumor cell lines, but not in normal hematopoietic tissues or other normal tissue, with the exception of testis.

It is found in the nucleus. Its subcellular location is the nucleolus. The protein resides in the cytoplasm. Functionally, non-catalytic component of the RNA exosome complex which has 3'-&gt;5' exoribonuclease activity and participates in a multitude of cellular RNA processing and degradation events. In the nucleus, the RNA exosome complex is involved in proper maturation of stable RNA species such as rRNA, snRNA and snoRNA, in the elimination of RNA processing by-products and non-coding 'pervasive' transcripts, such as antisense RNA species and promoter-upstream transcripts (PROMPTs), and of mRNAs with processing defects, thereby limiting or excluding their export to the cytoplasm. The RNA exosome may be involved in Ig class switch recombination (CSR) and/or Ig variable region somatic hypermutation (SHM) by targeting AICDA deamination activity to transcribed dsDNA substrates. In the cytoplasm, the RNA exosome complex is involved in general mRNA turnover and specifically degrades inherently unstable mRNAs containing AU-rich elements (AREs) within their 3' untranslated regions, and in RNA surveillance pathways, preventing translation of aberrant mRNAs. It seems to be involved in degradation of histone mRNA. The catalytic inactive RNA exosome core complex of 9 subunits (Exo-9) is proposed to play a pivotal role in the binding and presentation of RNA for ribonucleolysis, and to serve as a scaffold for the association with catalytic subunits and accessory proteins or complexes. In vitro, EXOSC5 does not bind or digest single-stranded RNA and binds to double-stranded DNA without detectable DNase activity. This chain is Exosome complex component RRP46 (EXOSC5), found in Homo sapiens (Human).